The following is a 162-amino-acid chain: Interleukin-15 (162 aa).

A signal peptide spans 1 to 29; sequence MRISKPSLRSTSIQCYLCFLLNSHLITEA. A propeptide spanning residues 30–48 is cleaved from the precursor; it reads GIHVFVWGCISAGLPKTEA. Intrachain disulfides connect cysteine 83–cysteine 133 and cysteine 90–cysteine 136. Asparagine 119 and asparagine 127 each carry an N-linked (GlcNAc...) asparagine glycan.

This sequence belongs to the IL-15/IL-21 family.

The protein localises to the secreted. In terms of biological role, cytokine that plays a major role in the development of inflammatory and protective immune responses to microbial invaders and parasites by modulating immune cells of both the innate and adaptive immune systems. Stimulates the proliferation of natural killer cells, T-cells and B-cells and promotes the secretion of several cytokines. In monocytes, induces the production of IL8 and monocyte chemotactic protein 1/CCL2, two chemokines that attract neutrophils and monocytes respectively to sites of infection. Unlike most cytokines, which are secreted in soluble form, IL15 is expressed in association with its high affinity IL15RA on the surface of IL15-producing cells and delivers signals to target cells that express IL2RB and IL2RG receptor subunits. Binding to its receptor triggers the phosphorylation of JAK1 and JAK3 and the recruitment and subsequent phosphorylation of signal transducer and activator of transcription-3/STAT3 and STAT5. In mast cells, induces the rapid tyrosine phosphorylation of STAT6 and thereby controls mast cell survival and release of cytokines such as IL4. The protein is Interleukin-15 (IL15) of Cavia porcellus (Guinea pig).